We begin with the raw amino-acid sequence, 276 residues long: NADH-cytochrome b5 reductase 2 (276 aa).

Residues 15-127 enclose the FAD-binding FR-type domain; the sequence is EAKYPLPLIE…RGPTGRLFYN (113 aa). Residue Lys17 is modified to N6-acetyllysine. Position 18 is a phosphotyrosine (Tyr18). Residues 107 to 137 and 146 to 181 each bind FAD; these read ENMKIGDTILFRGPTGRLFYNEPGTLLIKTD and LVHHLGMIAGGTGITPMLQLIRHITKDTSDGTRMSL.

The protein belongs to the flavoprotein pyridine nucleotide cytochrome reductase family. The cofactor is FAD.

The enzyme catalyses 2 Fe(III)-[cytochrome b5] + NADH = 2 Fe(II)-[cytochrome b5] + NAD(+) + H(+). In terms of biological role, NADH-cytochrome b5 reductases are involved in desaturation and elongation of fatty acids, cholesterol biosynthesis, drug metabolism, and, in erythrocyte, methemoglobin reduction. Responsible for NADH-dependent lucigenin chemiluminescence in spermatozoa by reducing both lucigenin and 2-[4-iodophenyl]-3-[4-nitrophenyl]-5-[2,4-disulfophenyl]-2H tetrazolium monosodium salt (WST-1). This Rattus norvegicus (Rat) protein is NADH-cytochrome b5 reductase 2 (Cyb5r2).